We begin with the raw amino-acid sequence, 457 residues long: Omega-hydroxypalmitate O-feruloyl transferase (457 aa).

Residues histidine 184 and aspartate 404 each act as proton acceptor in the active site.

It belongs to the plant acyltransferase family. Expressed in roots, seedlings, leaves, stems, flowers and siliques. Detected at the protein level in roots and in seed coats.

It catalyses the reaction 16-hydroxyhexadecanoate + (E)-feruloyl-CoA = 16-feruloyloxyhexadecanoate + CoA. Functionally, involved in the synthesis of aromatics of the suberin polymer. Specifically affects the accumulation of the ferulate constituent of suberin in roots and seeds, but has no effect on the content of p-coumarate or sinapate. This chain is Omega-hydroxypalmitate O-feruloyl transferase (HHT1), found in Arabidopsis thaliana (Mouse-ear cress).